The primary structure comprises 72 residues: uncharacterized protein (72 aa).

Residues 51 to 72 (AKGGRQRGETVVVDDQCKEHKE) form a disordered region.

It belongs to the YiiE family.

This is an uncharacterized protein from Escherichia coli O6:K15:H31 (strain 536 / UPEC).